Here is a 284-residue protein sequence, read N- to C-terminus: Bifunctional protein FolD (284 aa).

Residues 166 to 168 and Ile232 contribute to the NADP(+) site; that span reads GAS.

It belongs to the tetrahydrofolate dehydrogenase/cyclohydrolase family. In terms of assembly, homodimer.

It carries out the reaction (6R)-5,10-methylene-5,6,7,8-tetrahydrofolate + NADP(+) = (6R)-5,10-methenyltetrahydrofolate + NADPH. The enzyme catalyses (6R)-5,10-methenyltetrahydrofolate + H2O = (6R)-10-formyltetrahydrofolate + H(+). Its pathway is one-carbon metabolism; tetrahydrofolate interconversion. In terms of biological role, catalyzes the oxidation of 5,10-methylenetetrahydrofolate to 5,10-methenyltetrahydrofolate and then the hydrolysis of 5,10-methenyltetrahydrofolate to 10-formyltetrahydrofolate. This is Bifunctional protein FolD from Azotobacter vinelandii (strain DJ / ATCC BAA-1303).